Consider the following 446-residue polypeptide: MSDDQSLSEVEMSPVGSEDPSLTPDPLPPHAHSSPDDDDDDDEEEEEETKVKKEQDSEDERFPVCIREAVSQVLNGYDWTLVPMPVRVNGGSKSKPHVKRPMNAFMVWAQAARRKLADQYPHLHNAELSKTLGKLWRLLNENDKRPFIEEAERLRMQHKKDHPDYKYQPRRRKNGKPSPGEGDGSSEAEGGAASIQAHYKNSHLDHRHGSPMSDGNSEHSTGQSHGPPTPPTTPKTELQAGKSDGKRDGSHALREGGKPQIDFGNVDIGEISHDVMSNMETFDVNEFDQYLPPNGHAGHPSHIGGYTSSYGLTGALAAGPSAWALAKQHSQTVADSKAQVKTESSSTSHYTEQPSTSQLTYTSLGLPHYGSAFPSISRPQFDYADHQPSSSYYSHSAQASSLYSAFSYMGPPQRPLYTAISDPPSVAQSHSPTHWEQPVYTTLSRP.

Disordered regions lie at residues 1 to 60 (MSDD…SEDE), 153 to 191 (RLRMQHKKDHPDYKYQPRRRKNGKPSPGEGDGSSEAEGG), and 203 to 264 (HLDH…IDFG). Over residues 36–48 (DDDDDDDEEEEEE) the composition is skewed to acidic residues. K52 is covalently cross-linked (Glycyl lysine isopeptide (Lys-Gly) (interchain with G-Cter in SUMO)). Residues 56-96 (DSEDERFPVCIREAVSQVLNGYDWTLVPMPVRVNGGSKSKP) are dimerization (DIM). A DNA-binding region (HMG box) is located at residues 98-166 (VKRPMNAFMV…QHKKDHPDYK (69 aa)). Basic and acidic residues predominate over residues 153–167 (RLRMQHKKDHPDYKY). Residues 213 to 226 (SDGNSEHSTGQSHG) show a composition bias toward polar residues. Residues 217–303 (SEHSTGQSHG…NGHAGHPSHI (87 aa)) form a transactivation domain (TAM) region. Residues 243–257 (SDGKRDGSHALREGG) show a composition bias toward basic and acidic residues. Residues 337–446 (KAQVKTESSS…QPVYTTLSRP (110 aa)) are transactivation domain (TAC). K341 participates in a covalent cross-link: Glycyl lysine isopeptide (Lys-Gly) (interchain with G-Cter in SUMO). Residues 421 to 446 (SDPPSVAQSHSPTHWEQPVYTTLSRP) form a disordered region. Over residues 426–446 (VAQSHSPTHWEQPVYTTLSRP) the composition is skewed to polar residues.

Interacts with the sumoylation factors ube2i/ubc9 and sumo1. Sumoylated. As to expression, first expressed at stages 13/14 at the lateral edges of the neural plate, in the neural crest forming region. By stage 22, neural crest cells migrate in the cranial region and strong expression is seen in the crest cells that populate the branchial arches as well as those migrating in the frontonasal region. Also strongly expressed in the trunk neural crest. Expression in the otic vesicle begins around stage 25 and persists until at least stage 40. At stage 30, expression is down-regulated in the cranial neural crest of the pharyngeal arches but persists in the trunk neural crest, in the otic vesicle and in discrete domains adjacent to the hindbrain. At stage 40, expression is restricted to the otic vesicle, differentiated pigment cells, and in several cranial ganglia.

It localises to the cytoplasm. The protein localises to the nucleus. Acts early in neural crest formation, functioning redundantly with the other group E Sox factors sox8 and sox9 to induce neural crest progenitors. Acts downstream of wnt-signaling at the neural plate border. Involved in the specification of neural crest progenitors fated to form the pigment cell lineage. In Xenopus laevis (African clawed frog), this protein is Transcription factor Sox-10 (sox10).